A 407-amino-acid chain; its full sequence is Peptidase T (407 aa).

His82 contacts Zn(2+). Asp84 is an active-site residue. Asp143 contacts Zn(2+). The active-site Proton acceptor is the Glu177. Zn(2+)-binding residues include Glu178, Asp200, and His382.

It belongs to the peptidase M20B family. It depends on Zn(2+) as a cofactor.

It is found in the cytoplasm. The catalysed reaction is Release of the N-terminal residue from a tripeptide.. Functionally, cleaves the N-terminal amino acid of tripeptides. The polypeptide is Peptidase T (Streptococcus pyogenes serotype M6 (strain ATCC BAA-946 / MGAS10394)).